The following is a 238-amino-acid chain: Uridylate kinase (238 aa).

12–15 (KLSG) serves as a coordination point for ATP. Residue glycine 54 participates in UMP binding. ATP contacts are provided by glycine 55 and arginine 59. UMP-binding positions include aspartate 74 and 135 to 142 (TGNPFFTT). Positions 162, 168, and 171 each coordinate ATP.

It belongs to the UMP kinase family. As to quaternary structure, homohexamer.

Its subcellular location is the cytoplasm. It carries out the reaction UMP + ATP = UDP + ADP. The protein operates within pyrimidine metabolism; CTP biosynthesis via de novo pathway; UDP from UMP (UMPK route): step 1/1. Inhibited by UTP. Functionally, catalyzes the reversible phosphorylation of UMP to UDP. The sequence is that of Uridylate kinase from Aromatoleum aromaticum (strain DSM 19018 / LMG 30748 / EbN1) (Azoarcus sp. (strain EbN1)).